The chain runs to 70 residues: Large ribosomal subunit protein eL38 (70 aa).

The protein belongs to the eukaryotic ribosomal protein eL38 family.

This is Large ribosomal subunit protein eL38 (RPL38) from Artemia franciscana (Brine shrimp).